The chain runs to 319 residues: Tyrosine--tRNA ligase (319 aa).

Residue Tyr-35 participates in L-tyrosine binding. The short motif at Pro-40–His-48 is the 'HIGH' region element. Residues Tyr-156, Gln-160, Asp-163, and Gln-178 each coordinate L-tyrosine. A 'KMSKS' region motif is present at residues Lys-213 to Ser-217. Ser-216 serves as a coordination point for ATP.

It belongs to the class-I aminoacyl-tRNA synthetase family. TyrS type 3 subfamily. Homodimer.

The protein resides in the cytoplasm. It catalyses the reaction tRNA(Tyr) + L-tyrosine + ATP = L-tyrosyl-tRNA(Tyr) + AMP + diphosphate + H(+). Its function is as follows. Catalyzes the attachment of tyrosine to tRNA(Tyr) in a two-step reaction: tyrosine is first activated by ATP to form Tyr-AMP and then transferred to the acceptor end of tRNA(Tyr). This chain is Tyrosine--tRNA ligase, found in Methanobrevibacter smithii (strain ATCC 35061 / DSM 861 / OCM 144 / PS).